We begin with the raw amino-acid sequence, 427 residues long: Glutamate-1-semialdehyde 2,1-aminomutase (427 aa).

The residue at position 266 (Lys-266) is an N6-(pyridoxal phosphate)lysine.

The protein belongs to the class-III pyridoxal-phosphate-dependent aminotransferase family. HemL subfamily. As to quaternary structure, homodimer. The cofactor is pyridoxal 5'-phosphate.

It localises to the cytoplasm. The enzyme catalyses (S)-4-amino-5-oxopentanoate = 5-aminolevulinate. The protein operates within porphyrin-containing compound metabolism; protoporphyrin-IX biosynthesis; 5-aminolevulinate from L-glutamyl-tRNA(Glu): step 2/2. This Aromatoleum aromaticum (strain DSM 19018 / LMG 30748 / EbN1) (Azoarcus sp. (strain EbN1)) protein is Glutamate-1-semialdehyde 2,1-aminomutase.